A 158-amino-acid chain; its full sequence is Cyclic pyranopterin monophosphate synthase (158 aa).

Residues 75–77 and 113–114 contribute to the substrate site; these read LCH and ME. Residue aspartate 128 is part of the active site.

This sequence belongs to the MoaC family. Homohexamer; trimer of dimers.

It carries out the reaction (8S)-3',8-cyclo-7,8-dihydroguanosine 5'-triphosphate = cyclic pyranopterin phosphate + diphosphate. Its pathway is cofactor biosynthesis; molybdopterin biosynthesis. Its function is as follows. Catalyzes the conversion of (8S)-3',8-cyclo-7,8-dihydroguanosine 5'-triphosphate to cyclic pyranopterin monophosphate (cPMP). This Actinobacillus pleuropneumoniae serotype 5b (strain L20) protein is Cyclic pyranopterin monophosphate synthase.